The following is a 265-amino-acid chain: MQRYAVGIEFSGIQYRGWQTQQPGVASVQETIERVLSKIADEPITLHGAGRTDAGVHATNMVAHFDTNAIRPERGWIMGANSQLPKDISIQWIKQMDEEFHARFKATARRYRYVVYNAPHRPALLHKQVTHIYQKLDVQKMIKAASKFEGTHNFETFRAAACQSNQPVRHVKHCRLFEHGRYLVLDIQADGFLHHMVRNIMGCLLEIGQGMYEIDHIDTMFAAEDRKAAGITAPPDGLYFIQCYYPEQFDLPQPPLGPHWLNLPE.

The Nucleophile role is filled by aspartate 53. Tyrosine 111 provides a ligand contact to substrate.

It belongs to the tRNA pseudouridine synthase TruA family. As to quaternary structure, homodimer.

The catalysed reaction is uridine(38/39/40) in tRNA = pseudouridine(38/39/40) in tRNA. Its function is as follows. Formation of pseudouridine at positions 38, 39 and 40 in the anticodon stem and loop of transfer RNAs. This chain is tRNA pseudouridine synthase A, found in Acinetobacter baumannii (strain SDF).